Consider the following 64-residue polypeptide: Small, acid-soluble spore protein D (64 aa).

This sequence belongs to the alpha/beta-type SASP family.

Functionally, SASP are bound to spore DNA. They are double-stranded DNA-binding proteins that cause DNA to change to an a-like conformation. They protect the DNA backbone from chemical and enzymatic cleavage and are thus involved in dormant spore's high resistance to UV light. This chain is Small, acid-soluble spore protein D (sspD), found in Bacillus subtilis (strain 168).